The sequence spans 340 residues: Flavonoid 7-O-methyltransferase 1 (340 aa).

An S-adenosyl-L-methionine-binding site is contributed by Asp-207. His-245 serves as the catalytic Proton acceptor.

Belongs to the class I-like SAM-binding methyltransferase superfamily. Cation-independent O-methyltransferase family. In terms of assembly, homodimer. In terms of tissue distribution, expressed in leaves.

It carries out the reaction (2S)-naringenin + S-adenosyl-L-methionine = (2S)-sakuranetin + S-adenosyl-L-homocysteine + H(+). The catalysed reaction is scutellarein + S-adenosyl-L-methionine = scutellarein 7-methyl ether + S-adenosyl-L-homocysteine. It catalyses the reaction apigenin + S-adenosyl-L-methionine = genkwanin + S-adenosyl-L-homocysteine + H(+). The enzyme catalyses luteolin + S-adenosyl-L-methionine = luteolin 7-methyl ether + S-adenosyl-L-homocysteine + H(+). It carries out the reaction chrysoeriol + S-adenosyl-L-methionine = velutin + S-adenosyl-L-homocysteine. The catalysed reaction is diosmetin + S-adenosyl-L-methionine = luteolin 4',7-dimethyl ether + S-adenosyl-L-homocysteine. It catalyses the reaction acacetin + S-adenosyl-L-methionine = apigenin 4',7-dimethyl ether + S-adenosyl-L-homocysteine. The enzyme catalyses scutellarein 4'-methyl ether + S-adenosyl-L-methionine = ladanein + S-adenosyl-L-homocysteine. It participates in flavonoid metabolism. Functionally, flavonoid 7-O-methyltransferase involved in the biosynthesis of polymethoxylated flavonoids natural products such as nevadensin and salvigenin, aroma compounds which contribute to the flavor of sweet basil, and exhibit pharmacological activities such as anti-allergic, anti-oxidant, antibacterial, anti-proliferative, and anti-inflammatory effects. Catalyzes S-adenosylmethionine-dependent regioselective 7-O-methylation of flavonoids; active on various hydroxylated flavonoid substrates, including apigenin (API) and luteolin (LUT), and, with a lower efficiency, scutellarein (SCU), naringenin (NAR), chrysoeriol (CHRYS), diosmetin (DIOS), acacetin (ACA) and scutellarein-7-methyl ether (SCU7Me). The chain is Flavonoid 7-O-methyltransferase 1 from Ocimum basilicum (Sweet basil).